Reading from the N-terminus, the 185-residue chain is Peptidyl-tRNA hydrolase (185 aa).

Y14 serves as a coordination point for tRNA. Residue H19 is the Proton acceptor of the active site. Residues Y65, N67, and N113 each coordinate tRNA.

The protein belongs to the PTH family. As to quaternary structure, monomer.

It is found in the cytoplasm. The enzyme catalyses an N-acyl-L-alpha-aminoacyl-tRNA + H2O = an N-acyl-L-amino acid + a tRNA + H(+). Functionally, hydrolyzes ribosome-free peptidyl-tRNAs (with 1 or more amino acids incorporated), which drop off the ribosome during protein synthesis, or as a result of ribosome stalling. Catalyzes the release of premature peptidyl moieties from peptidyl-tRNA molecules trapped in stalled 50S ribosomal subunits, and thus maintains levels of free tRNAs and 50S ribosomes. The protein is Peptidyl-tRNA hydrolase of Rickettsia bellii (strain OSU 85-389).